We begin with the raw amino-acid sequence, 469 residues long: Interstitial collagenase (469 aa).

The N-terminal stretch at 1–19 is a signal peptide; it reads MHSFPPLLLLLFWGVVSHS. Positions 20-99 are cleaved as a propeptide — activation peptide; the sequence is FPATLETQEQ…PRCGVPDVAQ (80 aa). At Ser57 the chain carries Phosphoserine. The Cysteine switch signature appears at 90–97; that stretch reads PRCGVPDV. Cys92 contacts Zn(2+). Residues 98-276 form a metalloprotease region; sequence AQFVLTEGNP…VQPIGPQTPK (179 aa). Asn120 is a glycosylation site (N-linked (GlcNAc...) asparagine). Residues Asp124 and Asp158 each contribute to the Ca(2+) site. Zn(2+) contacts are provided by His168 and Asp170. Ca(2+)-binding residues include Asp175, Gly176, Gly178, and Asn180. Residue His183 participates in Zn(2+) binding. Residues Gly190, Gly192, and Asp194 each coordinate Ca(2+). His196 is a Zn(2+) binding site. Ca(2+) is bound by residues Asp198, Glu199, and Glu201. His218 provides a ligand contact to Zn(2+). Residue Glu219 is part of the active site. Residues His222 and His228 each contribute to the Zn(2+) site. Thr274 carries the phosphothreonine modification. Hemopexin repeat units follow at residues 275–324, 325–371, 374–422, and 423–466; these read PKAC…WPQL, PNGL…FGFP, VKHI…FPGI, and GHKV…WFNC. A disulfide bridge connects residues Cys278 and Cys466. Residues Asp285 and Glu329 each coordinate Ca(2+). At Tyr360 the chain carries Phosphotyrosine; by PKDCC. Ca(2+) contacts are provided by Asp378 and Asp427.

It belongs to the peptidase M10A family. As to quaternary structure, (Microbial infection) Interacts with HIV-1 Tat. Ca(2+) serves as cofactor. The cofactor is Zn(2+). In terms of processing, undergoes autolytic cleavage to two major forms (22 kDa and 27 kDa). A minor form (25 kDa) is the glycosylated form of the 22 kDa form. The 27 kDa form has no activity while the 22/25 kDa form can act as activator for collagenase. Tyrosine phosphorylated in platelets by PKDCC/VLK.

Its subcellular location is the secreted. It localises to the extracellular space. The protein resides in the extracellular matrix. The enzyme catalyses Cleavage of the triple helix of collagen at about three-quarters of the length of the molecule from the N-terminus, at 775-Gly-|-Ile-776 in the alpha1(I) chain. Cleaves synthetic substrates and alpha-macroglobulins at bonds where P1' is a hydrophobic residue.. Can be activated without removal of the activation peptide. Cleaves collagens of types I, II, and III at one site in the helical domain. Also cleaves collagens of types VII and X. In case of HIV infection, interacts and cleaves the secreted viral Tat protein, leading to a decrease in neuronal Tat's mediated neurotoxicity. In Homo sapiens (Human), this protein is Interstitial collagenase (MMP1).